Consider the following 293-residue polypeptide: NAD kinase (293 aa).

Asp-74 functions as the Proton acceptor in the catalytic mechanism. NAD(+) contacts are provided by residues 74-75 (DG), Arg-79, 148-149 (NE), Arg-176, Asp-178, 189-194 (TAYALS), and Gln-248.

Belongs to the NAD kinase family. The cofactor is a divalent metal cation.

Its subcellular location is the cytoplasm. The catalysed reaction is NAD(+) + ATP = ADP + NADP(+) + H(+). Involved in the regulation of the intracellular balance of NAD and NADP, and is a key enzyme in the biosynthesis of NADP. Catalyzes specifically the phosphorylation on 2'-hydroxyl of the adenosine moiety of NAD to yield NADP. This Blochmanniella floridana protein is NAD kinase.